The following is an 87-amino-acid chain: Alpha-elapitoxin-Ls2a (87 aa).

The signal sequence occupies residues 1-21 (MKTLLLTLVVVTIVCLDLGYT). 5 cysteine pairs are disulfide-bonded: Cys-24-Cys-41, Cys-34-Cys-62, Cys-47-Cys-51, Cys-66-Cys-77, and Cys-78-Cys-83.

The protein belongs to the three-finger toxin family. Long-chain subfamily. Type II alpha-neurotoxin sub-subfamily. In terms of tissue distribution, expressed by the venom gland.

It is found in the secreted. In terms of biological role, binds with high affinity to muscular (tested on Torpedo marmorata, Kd=1.6 nM) and neuronal (chimeric alpha-7/CHRNA7, Kd=3 nM) nicotinic acetylcholine receptor (nAChR) and inhibits acetylcholine from binding to the receptor, thereby impairing neuromuscular and neuronal transmission. Also shows a very weak inhibition on GABA(A) receptors. The toxin (10 uM) inhibits 83% of current in channels composed of alpha-1-beta-3-gamma-2 (GABRA1-GABRB3-GABRG2) subunits, 39% of current in channels composed of alpha-2-beta-2-gamma-2 (GABRA2-GABRB2-GABRG2) subunits, and 33% of current in channels composed of alpha-5-beta-2-gamma-2 (GABRA5-GABRB2-GABRG2) subunits. The polypeptide is Alpha-elapitoxin-Ls2a (Laticauda semifasciata (Black-banded sea krait)).